The chain runs to 310 residues: Oxygen-dependent coproporphyrinogen-III oxidase (310 aa).

Residue Ser92 coordinates substrate. Residues His96 and His106 each contribute to the a divalent metal cation site. The Proton donor role is filled by His106. 108 to 110 (NVR) is a substrate binding site. A divalent metal cation-binding residues include His145 and His175. Positions 240-275 (YVEFNLIWDRGTLFGLQSGGRTESILMSMPPLARWE) are important for dimerization. Residue 258–260 (GGR) participates in substrate binding.

It belongs to the aerobic coproporphyrinogen-III oxidase family. In terms of assembly, homodimer. A divalent metal cation is required as a cofactor.

The protein resides in the cytoplasm. It carries out the reaction coproporphyrinogen III + O2 + 2 H(+) = protoporphyrinogen IX + 2 CO2 + 2 H2O. Its pathway is porphyrin-containing compound metabolism; protoporphyrin-IX biosynthesis; protoporphyrinogen-IX from coproporphyrinogen-III (O2 route): step 1/1. Its function is as follows. Involved in the heme biosynthesis. Catalyzes the aerobic oxidative decarboxylation of propionate groups of rings A and B of coproporphyrinogen-III to yield the vinyl groups in protoporphyrinogen-IX. This chain is Oxygen-dependent coproporphyrinogen-III oxidase, found in Pectobacterium atrosepticum (strain SCRI 1043 / ATCC BAA-672) (Erwinia carotovora subsp. atroseptica).